The primary structure comprises 481 residues: Long chain base biosynthesis protein 1b (481 aa).

The chain crosses the membrane as a helical span at residues 32–52; the sequence is FGIHIDGHLVVEGLLIAAILF.

The protein belongs to the class-II pyridoxal-phosphate-dependent aminotransferase family. Heterodimer with LCB2. Component of the serine palmitoyltransferase (SPT) complex, composed of LCB1 and LCB2. The cofactor is pyridoxal 5'-phosphate.

Its subcellular location is the endoplasmic reticulum membrane. It carries out the reaction L-serine + hexadecanoyl-CoA + H(+) = 3-oxosphinganine + CO2 + CoA. Its pathway is lipid metabolism; sphingolipid metabolism. Functionally, serine palmitoyltransferase (SPT). The heterodimer formed with LCB2 constitutes the catalytic core. This chain is Long chain base biosynthesis protein 1b, found in Oryza sativa subsp. japonica (Rice).